The primary structure comprises 283 residues: MATNLQDGNTPCLAATPSDPRPTVLVFDSGVGGLSVYNEIRQLLPNLHYIYAFDNVAFPYGEKSEEFIVERVVEIVTAVQQRYPLALAVIACNTASTVSLPALREKFAFPVVGVVPAIKPAARLTANGIVGLLATRGTVKRPYTRELIDRFANECRIEMLGSAELVELAEAKLHGEPVPLEELRRILRPWLRMQEPPDTVVLGCTHFPLLQEELQRVLPEGTRLIDSGAAIARRTAWLLEHEAPDAKSSDENKAFCMALTAETEQLLPVLHRYGFPTLEKLPL.

Residues 28 to 29 (DS) and 60 to 61 (YG) contribute to the substrate site. Catalysis depends on cysteine 92, which acts as the Proton donor/acceptor. 93–94 (NT) provides a ligand contact to substrate. Catalysis depends on cysteine 204, which acts as the Proton donor/acceptor. Residue 205 to 206 (TH) coordinates substrate.

It belongs to the aspartate/glutamate racemases family.

The catalysed reaction is L-glutamate = D-glutamate. It functions in the pathway cell wall biogenesis; peptidoglycan biosynthesis. In terms of biological role, provides the (R)-glutamate required for cell wall biosynthesis. The sequence is that of Glutamate racemase from Klebsiella pneumoniae (strain 342).